The sequence spans 417 residues: Serine hydroxymethyltransferase (417 aa).

Residues Leu121 and 125–127 (GHL) contribute to the (6S)-5,6,7,8-tetrahydrofolate site. The residue at position 229 (Lys229) is an N6-(pyridoxal phosphate)lysine. A (6S)-5,6,7,8-tetrahydrofolate-binding site is contributed by 355–357 (SPF).

This sequence belongs to the SHMT family. As to quaternary structure, homodimer. It depends on pyridoxal 5'-phosphate as a cofactor.

Its subcellular location is the cytoplasm. It catalyses the reaction (6R)-5,10-methylene-5,6,7,8-tetrahydrofolate + glycine + H2O = (6S)-5,6,7,8-tetrahydrofolate + L-serine. The protein operates within one-carbon metabolism; tetrahydrofolate interconversion. Its pathway is amino-acid biosynthesis; glycine biosynthesis; glycine from L-serine: step 1/1. In terms of biological role, catalyzes the reversible interconversion of serine and glycine with tetrahydrofolate (THF) serving as the one-carbon carrier. This reaction serves as the major source of one-carbon groups required for the biosynthesis of purines, thymidylate, methionine, and other important biomolecules. Also exhibits THF-independent aldolase activity toward beta-hydroxyamino acids, producing glycine and aldehydes, via a retro-aldol mechanism. In Klebsiella pneumoniae subsp. pneumoniae (strain ATCC 700721 / MGH 78578), this protein is Serine hydroxymethyltransferase.